Here is a 983-residue protein sequence, read N- to C-terminus: Receptor-type tyrosine-protein phosphatase-like N (983 aa).

A signal peptide spans 1–40 (MRRPRRPGGPAGCGGSEGSGGLRLLVCLLLLSGRPGGCSA). Residues 41–137 (ISAHGCLFDR…HPRDRSGSVP (97 aa)) are RESP18 homology domain. Residues 41 to 579 (ISAHGCLFDR…RQAHGISPMR (539 aa)) are Lumenal-facing. The cysteines at positions 59 and 68 are disulfide-linked. Residues 118–133 (RIPRLRPPEPHPRDRS) show a composition bias toward basic and acidic residues. Disordered regions lie at residues 118–179 (RIPR…SPLS), 293–330 (RARAPRLPEEGGSSRAEDSSEGHEEEVLGGHGEKSPPQ), and 399–420 (GDTADARPPTPLLPGHPTASST). A compositionally biased stretch (polar residues) spans 148-158 (SQGNPTGSSPA). A compositionally biased stretch (basic and acidic residues) spans 307–326 (RAEDSSEGHEEEVLGGHGEK). Phosphoserine occurs at positions 311 and 312. The tract at residues 453 to 579 (SPLGQSQPTV…RQAHGISPMR (127 aa)) is sufficient for dimerization of proICA512. Asparagine 510 and asparagine 528 each carry an N-linked (GlcNAc...) asparagine glycan. Residues 580 to 604 (SLLLTLVALAGVAGLLVALAVALCM) traverse the membrane as a helical segment. Residues 605-736 (RHHSKQRDKE…PNTCATAQGE (132 aa)) form a sufficient for dimerization of proICA512 region. At 605 to 983 (RHHSKQRDKE…VNAILKALPQ (379 aa)) the chain is on the cytoplasmic side. The tract at residues 648-684 (RAEGQPEPSRVSSVSSQFSDAAQASPSSHSSTPSWCE) is disordered. The span at 652-681 (QPEPSRVSSVSSQFSDAAQASPSSHSSTPS) shows a compositional bias: low complexity. The Tyrosine-protein phosphatase domain maps to 713–973 (LAKEWQALCA…EFALTAVAEE (261 aa)). Lysine 758 is covalently cross-linked (Glycyl lysine isopeptide (Lys-Gly) (interchain with G-Cter in SUMO)).

Belongs to the protein-tyrosine phosphatase family. Receptor class 8 subfamily. As to quaternary structure, homodimer; shown for the unprocessed protein (proICA512) in the endoplasmic reticulum and resolved during protein maturation as ICA512-TMF seems to be predominantly monomeric in secretory granules; however, ICA512-CCF interacts with ICA512-TMF disrupting the ICA512-TMF:SNTB2 complex. The isolated lumenal RESP18 homology domain has been shown to form disulfide-linked homooligomers. Interacts (via cytoplasmic domain) with phosphorylated SNTB2; this protects PTPRN against cleavage by CAPN1 to produce ICA512-CCF. Dephosphorylation of SNTB2 upon insulin stimulation disrupts the interaction and results in PTPRN cleavage. Interacts with SNX19. ICA512-CCF interacts with PIAS4; in the nucleus. Interacts with STAT5B (phosphorylated); down-regulated by ICA512-CCF sumoylation; ICA512-CCF prevents STAT5B dephosphorylation; ICA512-CCF mediates interaction of STAT5B with PIAS4. Interacts (via RESP18 homology domain) with insulin and proinsulin. Interacts with PTPRN2, PTPRA and PTPRE. In terms of processing, subject to proteolytic cleavage at multiple sites. Subject to cleavage on a pair of basic residues. Following exocytosis of secretory granules in pancreatic beta-cells ICA512-TMF located in the plasma-membrane is cleaved by mu-type calpain CPN1 to yield ICA512-CCF. Post-translationally, N-glycosylated. O-glycosylated. In terms of processing, sumoylated at two sites including Lys-758. Sumoylation decreases interaction with STAT5. Detected in pancreas islets. Detected in pancreas alpha, beta and delta cells, and in chromaffin cells in the adrenal medulla. Detected in amygdala, hypothalamus, autonomous nerve fibers and ganglia, especially at synaptic contacts. Detected in pituitary (at protein level). Detected in brain, specifically in cerebral cortex, diencephalon and brain stem.

Its subcellular location is the membrane. The protein localises to the cytoplasmic vesicle. It is found in the secretory vesicle membrane. It localises to the perikaryon. The protein resides in the cell projection. Its subcellular location is the axon. The protein localises to the synapse. It is found in the cell membrane. It localises to the endosome. The protein resides in the nucleus. Functionally, plays a role in vesicle-mediated secretory processes. Required for normal accumulation of secretory vesicles in hippocampus, pituitary and pancreatic islets. Required for the accumulation of normal levels of insulin-containing vesicles and preventing their degradation. Plays a role in insulin secretion in response to glucose stimuli. Required for normal accumulation of the neurotransmitters norepinephrine, dopamine and serotonin in the brain. In females, but not in males, required for normal accumulation and secretion of pituitary hormones, such as luteinizing hormone (LH) and follicle-stimulating hormone (FSH). Required to maintain normal levels of renin expression and renin release. Seems to lack intrinsic enzyme activity. Its function is as follows. ICA512-TMF regulates dynamics and exocytosis of insulin secretory granules (SGs); binding of ICA512-TMF to SNTB2/beta-2-syntrophin is proposed to restrain SGs mobility and exocytosis by tethering them to the actin cytoskeleton depending on UTRN; the function is inhibited by cytoplasmic ICA512-CFF dimerizing with ICA512-TMF and displacing SNTB2. In terms of biological role, ICA512-CCF translocated to the nucleus promotes expression of insulin and other granule-related genes; the function implicates binding to and regulating activity of STAT5B probably by preventing its dephosphorylation and potentially by inducing its sumoylation by recruiting PIAS4. Enhances pancreatic beta-cell proliferation by converging with signaling by STAT5B and STAT3. ICA512-CCF located in the cytoplasm regulates dynamics and exocytosis of insulin secretory granules (SGs) by dimerizing with ICA512-TMF and displacing SNTB2 thus enhancing SGs mobility and exocytosis. This Rattus norvegicus (Rat) protein is Receptor-type tyrosine-protein phosphatase-like N (Ptprn).